Consider the following 451-residue polypeptide: Trigger factor (451 aa).

The PPIase FKBP-type domain maps to 165-250 (DDKLTIDFEG…LHQIQVREAL (86 aa)).

This sequence belongs to the FKBP-type PPIase family. Tig subfamily.

The protein localises to the cytoplasm. It catalyses the reaction [protein]-peptidylproline (omega=180) = [protein]-peptidylproline (omega=0). In terms of biological role, involved in protein export. Acts as a chaperone by maintaining the newly synthesized protein in an open conformation. Functions as a peptidyl-prolyl cis-trans isomerase. This Helicobacter pylori (strain P12) protein is Trigger factor.